The following is a 256-amino-acid chain: uncharacterized protein (256 aa).

Transmembrane regions (helical) follow at residues 181–201 and 231–251; these read CCII…ASMV and GIAV…GLIA.

Its subcellular location is the cell membrane. This is an uncharacterized protein from Methanocaldococcus jannaschii (strain ATCC 43067 / DSM 2661 / JAL-1 / JCM 10045 / NBRC 100440) (Methanococcus jannaschii).